A 449-amino-acid polypeptide reads, in one-letter code: Cyclin-B1-5 (449 aa).

Disordered stretches follow at residues 1–37 (MATR…AGRP) and 98–147 (PARK…GGSA). Low complexity-rich tracts occupy residues 8-37 (AAAA…AGRP) and 136-147 (SEGAGSSSGGSA).

It belongs to the cyclin family. Cyclin AB subfamily.

The polypeptide is Cyclin-B1-5 (CYCB1-5) (Oryza sativa subsp. japonica (Rice)).